The primary structure comprises 122 residues: Acidic phospholipase A2 CbIalpha (122 aa).

Intrachain disulfides connect Cys-26–Cys-115, Cys-28–Cys-44, Cys-43–Cys-95, Cys-49–Cys-122, Cys-50–Cys-88, Cys-57–Cys-81, and Cys-75–Cys-86. Ca(2+) is bound by residues Tyr-27, Gly-29, and Gly-31. Residue His-47 is part of the active site. Asp-48 serves as a coordination point for Ca(2+). The active site involves Asp-89.

Belongs to the phospholipase A2 family. Group II subfamily. D49 sub-subfamily. In terms of assembly, heterodimer of an acidic subunit (CbIalpha or CbIbeta) and a basic subunit (CbII). The acidic subunit is non-toxic, and increases the toxicity of the basic subunit. Requires Ca(2+) as cofactor. In terms of tissue distribution, expressed by the venom gland.

It localises to the secreted. The catalysed reaction is a 1,2-diacyl-sn-glycero-3-phosphocholine + H2O = a 1-acyl-sn-glycero-3-phosphocholine + a fatty acid + H(+). Its function is as follows. Heterodimer: presynaptic neurotoxin. Functionally, monomer: Snake venom phospholipase A2 (PLA2) is inactive towards micellar phosphatidylcholine but is weakly active towards non-micellar dithiolecithin. PLA2 catalyzes the calcium-dependent hydrolysis of the 2-acyl groups in 3-sn-phosphoglycerides. The chain is Acidic phospholipase A2 CbIalpha from Pseudocerastes fieldi (Field's horned viper).